Here is a 187-residue protein sequence, read N- to C-terminus: UPF0398 protein SH1465 (187 aa).

The protein belongs to the UPF0398 family.

The chain is UPF0398 protein SH1465 from Staphylococcus haemolyticus (strain JCSC1435).